A 231-amino-acid polypeptide reads, in one-letter code: MKRGKRYLENLKLYDKTQQYSSDEAMDIVLKTANAKFDETIDLAVRLGVDPRHADQQVRGTVILPHGTGKTVKVLVFAKGEKAKEAEAAGADYVGAEELVEKIQKENWFDYDVVIATPDMMGVVGRLGKLLGPKGLMPNPKSGTVTFEVEKAVKEAKAGKIEYRIDKAGIIHVPIGKKSFGKEKLLENFRTVMDAIIKSKPAAAKGQYIKSVVLSSTMGPGVKVNPARIFE.

Belongs to the universal ribosomal protein uL1 family. Part of the 50S ribosomal subunit.

Functionally, binds directly to 23S rRNA. The L1 stalk is quite mobile in the ribosome, and is involved in E site tRNA release. Its function is as follows. Protein L1 is also a translational repressor protein, it controls the translation of the L11 operon by binding to its mRNA. In Caldanaerobacter subterraneus subsp. tengcongensis (strain DSM 15242 / JCM 11007 / NBRC 100824 / MB4) (Thermoanaerobacter tengcongensis), this protein is Large ribosomal subunit protein uL1.